The chain runs to 119 residues: Beta-2-microglobulin (119 aa).

The N-terminal stretch at 1 to 20 (MARLVVVALLVLLCLSGLEA) is a signal peptide. Residues 25–114 (PKIQVYSRHP…VTFTAPKTVK (90 aa)) form the Ig-like C1-type domain. Residues C45 and C100 are joined by a disulfide bond.

It belongs to the beta-2-microglobulin family. In terms of assembly, heterodimer of an alpha chain and a beta chain. Beta-2-microglobulin is the beta-chain of major histocompatibility complex class I molecules.

Its subcellular location is the secreted. In terms of biological role, component of the class I major histocompatibility complex (MHC). Involved in the presentation of peptide antigens to the immune system. In Chiropotes satanas (Brown-bearded saki), this protein is Beta-2-microglobulin (B2M).